Here is a 293-residue protein sequence, read N- to C-terminus: Foldase protein PrsA 2 (293 aa).

The signal sequence occupies residues 1–20; the sequence is MKKKLILGLVMMMALFSLAA. Cys-21 carries the N-palmitoyl cysteine lipid modification. The S-diacylglycerol cysteine moiety is linked to residue Cys-21. Positions 135-226 constitute a PpiC domain; it reads QPDITVSHIL…YGYHIIQMDK (92 aa).

This sequence belongs to the PrsA family.

The protein resides in the cell membrane. The enzyme catalyses [protein]-peptidylproline (omega=180) = [protein]-peptidylproline (omega=0). In terms of biological role, plays a major role in protein secretion by helping the post-translocational extracellular folding of several secreted proteins. This chain is Foldase protein PrsA 2 (prsA2), found in Listeria monocytogenes serovar 1/2a (strain ATCC BAA-679 / EGD-e).